Here is a 517-residue protein sequence, read N- to C-terminus: Crotonobetaine/carnitine--CoA ligase (517 aa).

It belongs to the ATP-dependent AMP-binding enzyme family.

It catalyses the reaction 4-(trimethylamino)butanoate + ATP + CoA = 4-(trimethylamino)butanoyl-CoA + AMP + diphosphate. It carries out the reaction crotonobetaine + ATP + CoA = crotonobetainyl-CoA + AMP + diphosphate. The catalysed reaction is (R)-carnitine + ATP + CoA = (R)-carnitinyl-CoA + AMP + diphosphate. It functions in the pathway amine and polyamine metabolism; carnitine metabolism. In terms of biological role, catalyzes the transfer of CoA to carnitine, generating the initial carnitinyl-CoA needed for the CaiB reaction cycle. Also has activity toward crotonobetaine and gamma-butyrobetaine. The polypeptide is Crotonobetaine/carnitine--CoA ligase (Escherichia coli O7:K1 (strain IAI39 / ExPEC)).